The following is a 293-amino-acid chain: Histone H3-like centromeric protein CSE4 (293 aa).

Residues 132–141 (QDLSYDESDY) show a composition bias toward acidic residues. A disordered region spans residues 132–169 (QDLSYDESDYSDPLQEIDSNYRESPRRTTDKILKSSSK). Residues 150–164 (SNYRESPRRTTDKIL) show a composition bias toward basic and acidic residues. The segment at 157–291 (RRTTDKILKS…VQLARRIRGQ (135 aa)) is H3-like.

Belongs to the histone H3 family. As to quaternary structure, component of centromeric nucleosomes, where DNA is wrapped around a histone octamer core. The octamer contains two molecules each of H2A, H2B, CSE4/CENPA and H4 assembled in one CSE4-H4 heterotetramer and two H2A-H2B heterodimers. Interacts with the inner kinetochore. Ubiquitinated. Is degraded through ubiquitin-mediated proteolysis when not protected by its association to the kinetochore.

The protein resides in the nucleus. The protein localises to the chromosome. Its subcellular location is the centromere. Functionally, histone H3-like nucleosomal protein that is specifically found in centromeric nucleosomes. Replaces conventional H3 in the nucleosome core of centromeric chromatin that serves as an assembly site for the inner kinetochore. Required for recruitment and assembly of kinetochore proteins, mitotic progression and chromosome segregation. May serve as an epigenetic mark that propagates centromere identity through replication and cell division. This Monosporozyma servazzii (Yeast) protein is Histone H3-like centromeric protein CSE4 (CSE4).